A 323-amino-acid polypeptide reads, in one-letter code: Lipid A biosynthesis myristoyltransferase (323 aa).

The chain crosses the membrane as a helical span at residues 23–43 (YWGAWLGVAAMAGIALTPPKF). An HXXXXD motif motif is present at residues 139-144 (HGWAVD).

The protein belongs to the LpxL/LpxM/LpxP family. LpxM subfamily.

Its subcellular location is the cell inner membrane. It catalyses the reaction alpha-Kdo-(2-&gt;4)-alpha-Kdo-(2-&gt;6)-(dodecanoyl)-lipid IVA (E. coli) + tetradecanoyl-[ACP] = alpha-Kdo-(2-&gt;4)-alpha-Kdo-(2-&gt;6)-lipid A (E. coli) + holo-[ACP]. It carries out the reaction (9Z)-hexadecenoyl-(Kdo)2-lipid IVA (E. coli) + tetradecanoyl-[ACP] = ((9Z)-hexadecenoyl-tetradecanoyl)-(Kdo)2-lipid A + holo-[ACP]. It participates in glycolipid biosynthesis; KDO(2)-lipid A biosynthesis; KDO(2)-lipid A from CMP-3-deoxy-D-manno-octulosonate and lipid IV(A): step 4/4. It functions in the pathway bacterial outer membrane biogenesis; lipopolysaccharide biosynthesis. Its function is as follows. Catalyzes the transfer of myristate from myristoyl-[acyl-carrier-protein] (ACP) to Kdo(2)-(lauroyl)-lipid IV(A) to form Kdo(2)-lipid A. Can probably also catalyze the transfer of myristate to Kdo(2)-(palmitoleoyl)-lipid IV(A) to form the cold-adapted Kdo(2)-lipid A. In vitro, can acylate Kdo(2)-lipid IV(A), but acylation of (KDO)2-(lauroyl)-lipid IV(A) is about 100 times faster. In vitro, can use lauroyl-ACP but displays a slight kinetic preference for myristoyl-ACP. This is Lipid A biosynthesis myristoyltransferase from Escherichia coli (strain K12).